The chain runs to 525 residues: Phospho-2-dehydro-3-deoxyheptonate aldolase 1, chloroplastic (525 aa).

The segment covering 1-13 (MALSNASSLSTRS) has biased composition (polar residues). The segment at 1–35 (MALSNASSLSTRSIYGGDLSHRPSNRQSSFTFHPA) is disordered. Residues 1 to 52 (MALSNASSLSTRSIYGGDLSHRPSNRQSSFTFHPAVNTKPKSVNLVTAVHAA) constitute a chloroplast transit peptide.

This sequence belongs to the class-II DAHP synthase family.

The protein localises to the plastid. Its subcellular location is the chloroplast. The catalysed reaction is D-erythrose 4-phosphate + phosphoenolpyruvate + H2O = 7-phospho-2-dehydro-3-deoxy-D-arabino-heptonate + phosphate. Its pathway is metabolic intermediate biosynthesis; chorismate biosynthesis; chorismate from D-erythrose 4-phosphate and phosphoenolpyruvate: step 1/7. The polypeptide is Phospho-2-dehydro-3-deoxyheptonate aldolase 1, chloroplastic (DHS1) (Arabidopsis thaliana (Mouse-ear cress)).